The chain runs to 384 residues: MSYPNNKENSNNIGGGSFSVPSKQPQRVLQQQNTNINNHQTTSTVKSTITKPTTTGATTSTNTSTIPPTTTASSSSSSSSSSSSSSSSSSSSSSSSSQSVPKKKWCIDDFDIGKLLGMGRFGHVYLAREKKSQFIVALKVLFKNQLQTHNIEHQLRREIEIQSHLRHPNILRLFGYFYDDKRVFLIIEFAKGGECFKELQKVGSFNEQTAATYTLQIADALRYCHSKHVIHRDIKPENLLIGVGGEIKIADFGWSVHAPNTKRSTFCGTLEYLPPEVIEKKGYDQTADVWSLGILIFEFLVGRSPFTSDEEKNIFHNIQENDVYYPSSISPEAKDLISRLLVSDPHQRITLKDVINHPWIKKHAHPKSLEPTKLGLPLPSQMTY.

Composition is skewed to polar residues over residues 1–12 (MSYPNNKENSNN) and 19–29 (SVPSKQPQRVL). Residues 1 to 100 (MSYPNNKENS…SSSSSSSQSV (100 aa)) are disordered. Over residues 30-99 (QQQNTNINNH…SSSSSSSSQS (70 aa)) the composition is skewed to low complexity. The region spanning 110–360 (FDIGKLLGMG…LKDVINHPWI (251 aa)) is the Protein kinase domain. ATP is bound by residues 116-124 (LGMGRFGHV) and lysine 139. Aspartate 233 (proton acceptor) is an active-site residue.

It belongs to the protein kinase superfamily. Ser/Thr protein kinase family. Aurora subfamily. Interacts with icpA. Forms a complex at the central spindle.

Its subcellular location is the cytoplasm. The protein localises to the chromosome. The protein resides in the centromere. It localises to the cytoskeleton. It is found in the spindle pole. Its subcellular location is the cleavage furrow. The protein localises to the cell projection. The protein resides in the neuron projection. It carries out the reaction L-seryl-[protein] + ATP = O-phospho-L-seryl-[protein] + ADP + H(+). The enzyme catalyses L-threonyl-[protein] + ATP = O-phospho-L-threonyl-[protein] + ADP + H(+). In terms of biological role, part of a chromosomal passenger complex. The sequence is that of Aurora kinase (aurK) from Dictyostelium discoideum (Social amoeba).